Consider the following 357-residue polypeptide: Dual-specificity RNA methyltransferase RlmN (357 aa).

Catalysis depends on E89, which acts as the Proton acceptor. Residues 109–340 form the Radical SAM core domain; sequence EGEKYTVCVS…CTIRESKALD (232 aa). Cysteines 116 and 345 form a disulfide. 3 residues coordinate [4Fe-4S] cluster: C123, C127, and C130. Residues 173–174, S203, 226–228, and N302 contribute to the S-adenosyl-L-methionine site; these read GE and SLH. The active-site S-methylcysteine intermediate is C345.

This sequence belongs to the radical SAM superfamily. RlmN family. The cofactor is [4Fe-4S] cluster.

The protein resides in the cytoplasm. The catalysed reaction is adenosine(2503) in 23S rRNA + 2 reduced [2Fe-2S]-[ferredoxin] + 2 S-adenosyl-L-methionine = 2-methyladenosine(2503) in 23S rRNA + 5'-deoxyadenosine + L-methionine + 2 oxidized [2Fe-2S]-[ferredoxin] + S-adenosyl-L-homocysteine. It catalyses the reaction adenosine(37) in tRNA + 2 reduced [2Fe-2S]-[ferredoxin] + 2 S-adenosyl-L-methionine = 2-methyladenosine(37) in tRNA + 5'-deoxyadenosine + L-methionine + 2 oxidized [2Fe-2S]-[ferredoxin] + S-adenosyl-L-homocysteine. Specifically methylates position 2 of adenine 2503 in 23S rRNA and position 2 of adenine 37 in tRNAs. m2A2503 modification seems to play a crucial role in the proofreading step occurring at the peptidyl transferase center and thus would serve to optimize ribosomal fidelity. The protein is Dual-specificity RNA methyltransferase RlmN of Helicobacter pylori (strain P12).